The chain runs to 1027 residues: Transient-receptor-potential-like protein (1027 aa).

The interval 1–22 (MTKEGMLSAAGRRFSRCAPSPR) is disordered. ANK repeat units follow at residues 85–115 (MGRT…RIGN), 117–141 (LLCA…ITRE), and 163–192 (SDIS…SIEK). The next 6 membrane-spanning stretches (helical) occupy residues 355–375 (FFLY…YILM), 391–411 (FFYY…ATFE), 473–493 (FLMI…YYIF), 516–536 (VAEA…IYLF), 559–579 (FCFI…QLYW), and 640–660 (MFIM…IAMM). 2 disordered regions span residues 825 to 929 (KRDI…TYTS) and 1008 to 1027 (ENVK…NVEK). Over residues 855 to 874 (EESEEDDKSDETSSTDEEAD) the composition is skewed to acidic residues. Residues 910-923 (RASEADSKLPDRPL) are compositionally biased toward basic and acidic residues. Residues 1008 to 1017 (ENVKSPSPAS) show a composition bias toward polar residues.

The protein belongs to the transient receptor (TC 1.A.4) family. STrpC subfamily.

The protein resides in the membrane. Functionally, could mediate calcium entry and form a calcium permeant channel. This is Transient-receptor-potential-like protein (trp-1) from Caenorhabditis elegans.